Reading from the N-terminus, the 463-residue chain is Mitochondrial dynamics protein MID49 (463 aa).

Residues 1 to 24 lie on the Mitochondrial intermembrane side of the membrane; sequence MAELQIRKKEKKSGDGIGTMVDFL. A helical transmembrane segment spans residues 25 to 47; that stretch reads LANARLVLGVGGAAMLGIATLAV. The Cytoplasmic portion of the chain corresponds to 48–463; sequence KRLIDRATSP…EPDDVLKRER (416 aa). Positions 87 to 119 are disordered; sequence TLRRKEDLEHHCAPLSLPDPSQKMPEATGTSQV. Positions 89-98 are enriched in basic and acidic residues; the sequence is RRKEDLEHHC.

Belongs to the MID49/MID51 family.

It is found in the mitochondrion outer membrane. Mitochondrial outer membrane protein which regulates mitochondrial organization. It is required for mitochondrial fission and promotes the recruitment and association of the fission mediator dynamin-related protein 1 (DNM1L) to the mitochondrial surface independently of the mitochondrial fission FIS1 and MFF proteins. Regulates DNM1L GTPase activity. The sequence is that of Mitochondrial dynamics protein MID49 (mief2) from Xenopus laevis (African clawed frog).